A 289-amino-acid polypeptide reads, in one-letter code: Ribosomal RNA small subunit methyltransferase I (289 aa).

This sequence belongs to the methyltransferase superfamily. RsmI family.

The protein resides in the cytoplasm. The catalysed reaction is cytidine(1402) in 16S rRNA + S-adenosyl-L-methionine = 2'-O-methylcytidine(1402) in 16S rRNA + S-adenosyl-L-homocysteine + H(+). Functionally, catalyzes the 2'-O-methylation of the ribose of cytidine 1402 (C1402) in 16S rRNA. This chain is Ribosomal RNA small subunit methyltransferase I, found in Helicobacter pylori (strain J99 / ATCC 700824) (Campylobacter pylori J99).